Here is a 224-residue protein sequence, read N- to C-terminus: uncharacterized protein (224 aa).

A signal peptide spans 1–16 (MKILYSFLLLPFFSCA).

This is an uncharacterized protein from Escherichia coli.